Consider the following 168-residue polypeptide: uncharacterized protein (168 aa).

Positions 18-73 (RTTVKTKSHNPKTLYPNNKPRWESKLHAGPKGFQSSRTSEKPGRPDPDPEDDPPIP) are disordered. Residues 55–64 (TSEKPGRPDP) are compositionally biased toward basic and acidic residues. A run of 2 helical transmembrane segments spans residues 84-104 (IVVSVGTPLGLGVAILKVLEV) and 113-133 (VPLWVPYLTTLVTFGSSALGI).

The protein localises to the membrane. This is an uncharacterized protein from Arabidopsis thaliana (Mouse-ear cress).